The primary structure comprises 270 residues: Secreted RxLR effector protein 149 (270 aa).

A signal peptide spans 1–21; it reads MRNGVVLFGLFFIGYSSCVLA. The RxLR-dEER signature appears at 43–58; that stretch reads RTLQADDPERILAEER.

This sequence belongs to the RxLR effector family.

The protein localises to the secreted. It localises to the host nucleus. The protein resides in the host cytoplasm. Functionally, secreted effector that completely suppresses the host cell death induced by cell death-inducing proteins. This Plasmopara viticola (Downy mildew of grapevine) protein is Secreted RxLR effector protein 149.